A 241-amino-acid chain; its full sequence is Pyridoxine 5'-phosphate synthase (241 aa).

N7 lines the 3-amino-2-oxopropyl phosphate pocket. Residue 9 to 10 (DH) participates in 1-deoxy-D-xylulose 5-phosphate binding. Residue R18 coordinates 3-amino-2-oxopropyl phosphate. Catalysis depends on H43, which acts as the Proton acceptor. Positions 45 and 50 each coordinate 1-deoxy-D-xylulose 5-phosphate. E70 acts as the Proton acceptor in catalysis. T100 contacts 1-deoxy-D-xylulose 5-phosphate. The active-site Proton donor is the H190. Residues G191 and 212 to 213 (GH) each bind 3-amino-2-oxopropyl phosphate.

The protein belongs to the PNP synthase family. As to quaternary structure, homooctamer; tetramer of dimers.

It is found in the cytoplasm. The catalysed reaction is 3-amino-2-oxopropyl phosphate + 1-deoxy-D-xylulose 5-phosphate = pyridoxine 5'-phosphate + phosphate + 2 H2O + H(+). The protein operates within cofactor biosynthesis; pyridoxine 5'-phosphate biosynthesis; pyridoxine 5'-phosphate from D-erythrose 4-phosphate: step 5/5. Functionally, catalyzes the complicated ring closure reaction between the two acyclic compounds 1-deoxy-D-xylulose-5-phosphate (DXP) and 3-amino-2-oxopropyl phosphate (1-amino-acetone-3-phosphate or AAP) to form pyridoxine 5'-phosphate (PNP) and inorganic phosphate. The sequence is that of Pyridoxine 5'-phosphate synthase from Bordetella avium (strain 197N).